The chain runs to 237 residues: Mitochondrial inner membrane protease atp23 (237 aa).

A compositionally biased stretch (low complexity) spans 1–19; sequence MSDSQPGSTSSTGGKSDSG. Positions 1 to 23 are disordered; it reads MSDSQPGSTSSTGGKSDSGYIPG. Residue His-136 participates in a divalent metal cation binding. Residue Glu-137 is part of the active site. Residue His-140 coordinates a divalent metal cation.

The protein belongs to the peptidase M76 family.

Its subcellular location is the mitochondrion inner membrane. Has a dual role in the assembly of mitochondrial ATPase. Acts as a protease that removes N-terminal residues of mitochondrial ATPase CF(0) subunit 6 at the intermembrane space side. Also involved in the correct assembly of the membrane-embedded ATPase CF(0) particle, probably mediating association of subunit 6 with the subunit 9 ring. This Neosartorya fischeri (strain ATCC 1020 / DSM 3700 / CBS 544.65 / FGSC A1164 / JCM 1740 / NRRL 181 / WB 181) (Aspergillus fischerianus) protein is Mitochondrial inner membrane protease atp23 (atp23).